We begin with the raw amino-acid sequence, 24 residues long: Ranatuerin-4 (24 aa).

A disulfide bridge links Cys18 with Cys24.

The protein belongs to the frog skin active peptide (FSAP) family. Ranatuerin subfamily. As to expression, expressed by the skin glands.

It is found in the secreted. Antibacterial activity against Gram-positive bacterium S.aureus (MIC=55 uM). Shows no detectable hemolytic activity towards human erythrocytes. This Aquarana catesbeiana (American bullfrog) protein is Ranatuerin-4.